The primary structure comprises 172 residues: Orotate phosphoribosyltransferase (172 aa).

Residues R88, K89, K92, H94, and 113 to 121 (EDVTTSGGS) each bind 5-phospho-alpha-D-ribose 1-diphosphate. T117 and R145 together coordinate orotate.

Belongs to the purine/pyrimidine phosphoribosyltransferase family. PyrE subfamily. As to quaternary structure, homodimer. Mg(2+) is required as a cofactor.

It carries out the reaction orotidine 5'-phosphate + diphosphate = orotate + 5-phospho-alpha-D-ribose 1-diphosphate. The protein operates within pyrimidine metabolism; UMP biosynthesis via de novo pathway; UMP from orotate: step 1/2. In terms of biological role, catalyzes the transfer of a ribosyl phosphate group from 5-phosphoribose 1-diphosphate to orotate, leading to the formation of orotidine monophosphate (OMP). The protein is Orotate phosphoribosyltransferase of Methanospirillum hungatei JF-1 (strain ATCC 27890 / DSM 864 / NBRC 100397 / JF-1).